The primary structure comprises 737 residues: Methylcrotonoyl-CoA carboxylase subunit alpha, mitochondrial (737 aa).

A mitochondrion-targeting transit peptide spans 1–33 (MASRLLLLPRRRSRHGGASLLLARLLSSSSSEA). Positions 38 to 485 (AVEKVLVANR…DTHFIERYQN (448 aa)) constitute a Biotin carboxylation domain. ATP contacts are provided by residues K153, 185–246 (ANKI…PRHI), E237, and H272. Positions 157–355 (KRIMGAAGVP…LVEWQIRIAN (199 aa)) constitute an ATP-grasp domain. Mn(2+)-binding residues include E312, E326, and N328. Residue R330 is part of the active site. Residues 636-665 (YRQTLRAEQSPDDSSQPSASSEARSHPKGS) form a disordered region. Residues 647–657 (DDSSQPSASSE) show a composition bias toward low complexity. In terms of domain architecture, Biotinyl-binding spans 656 to 732 (SEARSHPKGS…FDSSVLFTVK (77 aa)). An N6-biotinyllysine modification is found at K698.

Probably a heterodimer composed of biotin-containing alpha subunits and beta subunits. It depends on biotin as a cofactor. Mn(2+) serves as cofactor.

The protein resides in the mitochondrion matrix. The catalysed reaction is 3-methylbut-2-enoyl-CoA + hydrogencarbonate + ATP = 3-methyl-(2E)-glutaconyl-CoA + ADP + phosphate + H(+). It functions in the pathway amino-acid degradation; L-leucine degradation; (S)-3-hydroxy-3-methylglutaryl-CoA from 3-isovaleryl-CoA: step 2/3. Functionally, biotin-attachment subunit of the 3-methylcrotonyl-CoA carboxylase, an enzyme that catalyzes the conversion of 3-methylcrotonyl-CoA to 3-methylglutaconyl-CoA, a critical step for leucine and isovaleric acid catabolism. The chain is Methylcrotonoyl-CoA carboxylase subunit alpha, mitochondrial (MCCA) from Oryza sativa subsp. japonica (Rice).